The primary structure comprises 760 residues: Serine/threonine-protein kinase dkf-1 (760 aa).

Phorbol-ester/DAG-type zinc fingers lie at residues 103–153 (PHVV…GIIV) and 194–244 (PHTL…PSNC). The PH domain maps to 316–444 (KNLEGWMIHF…QFIKESLQPP (129 aa)). The Protein kinase domain occupies 464 to 725 (VLSDKTLGSG…IEKCLEHGWL (262 aa)). ATP-binding positions include 470-478 (LGSGQFGTV) and Lys493. Asp589 acts as the Proton acceptor in catalysis. Position 626 is a phosphothreonine (Thr626).

This sequence belongs to the protein kinase superfamily. CAMK Ser/Thr protein kinase family. PKD subfamily. Requires Mg(2+) as cofactor. Prolonged phosphorylation at Thr-626 results in ubiquitination and degradation.

It is found in the cytoplasm. The protein localises to the membrane. It carries out the reaction L-seryl-[protein] + ATP = O-phospho-L-seryl-[protein] + ADP + H(+). The catalysed reaction is L-threonyl-[protein] + ATP = O-phospho-L-threonyl-[protein] + ADP + H(+). With respect to regulation, activated by DAG and phorbol esters. Phorbol-ester/DAG-type domain 1 binds phorbol ester with high affinity and mediates accumulation at the cell periphery. Phorbol-ester/DAG-type domain 2 binds phorbol ester with low affinity but may mediate initial contact, resulting in a conformational change allowing previously occluded domain 1 to anchor the kinase. Phosphorylation on Thr-626 is then also required for activation and may also result in a further conformational change. Its function is as follows. Converts transient diacylglycerol (DAG) signals into prolonged physiological effects, independently of PKC. Role in the regulation of growth and neuromuscular control of movement. Involved in immune response to S.aureus bacterium by activating transcription factor hlh-30 downstream of phospholipase plc-1. This Caenorhabditis briggsae protein is Serine/threonine-protein kinase dkf-1.